Here is a 31-residue protein sequence, read N- to C-terminus: Photosystem II reaction center protein T (31 aa).

The helical transmembrane segment at 3–23 threads the bilayer; that stretch reads ALVYTFLLVGTLGIIFFSIFF.

Belongs to the PsbT family. PSII is composed of 1 copy each of membrane proteins PsbA, PsbB, PsbC, PsbD, PsbE, PsbF, PsbH, PsbI, PsbJ, PsbK, PsbL, PsbM, PsbT, PsbY, PsbZ, Psb30/Ycf12, at least 3 peripheral proteins of the oxygen-evolving complex and a large number of cofactors. It forms dimeric complexes.

Its subcellular location is the plastid. The protein localises to the chloroplast thylakoid membrane. Its function is as follows. Found at the monomer-monomer interface of the photosystem II (PS II) dimer, plays a role in assembly and dimerization of PSII. PSII is a light-driven water plastoquinone oxidoreductase, using light energy to abstract electrons from H(2)O, generating a proton gradient subsequently used for ATP formation. In Tupiella akineta (Green alga), this protein is Photosystem II reaction center protein T.